The chain runs to 40 residues: Photosystem II reaction center protein J (40 aa).

A helical transmembrane segment spans residues 8-28 (IPLWLIGTVTGIPVIGLIGIF).

Belongs to the PsbJ family. PSII is composed of 1 copy each of membrane proteins PsbA, PsbB, PsbC, PsbD, PsbE, PsbF, PsbH, PsbI, PsbJ, PsbK, PsbL, PsbM, PsbT, PsbX, PsbY, PsbZ, Psb30/Ycf12, at least 3 peripheral proteins of the oxygen-evolving complex and a large number of cofactors. It forms dimeric complexes.

Its subcellular location is the plastid. The protein resides in the chloroplast thylakoid membrane. One of the components of the core complex of photosystem II (PSII). PSII is a light-driven water:plastoquinone oxidoreductase that uses light energy to abstract electrons from H(2)O, generating O(2) and a proton gradient subsequently used for ATP formation. It consists of a core antenna complex that captures photons, and an electron transfer chain that converts photonic excitation into a charge separation. The polypeptide is Photosystem II reaction center protein J (Vitis vinifera (Grape)).